The sequence spans 562 residues: MASLQCSFHFLGTNPKKYNPSSIFQSYSRTSFTKLSSRVSRQRFLRCTLSMNGCEADHKAPLGTVETRTLSTVPSPAAATERLITAVSDLKSQPPPFSSGIVRLQVPIEQKIGAIDWLHAQNEILPRSFFSRRSDSGRPDLLQDFSSDNGSSDHNPVSVAGIGSAVFFRDLDPFSHDDWRSIRRFLSSKSPLIRAYGGLRFDPTGKIAVEWEHFGSFYFTVPQVEFDEFGGSSMLAATVAWDNELSWTLENAIEALQETMLQVSSVIMRLRRESLGVIVVSKNHVPSEGAYYPAVNNALEIIKDKHSPLSKVVLARSSRIITDTDIDPIAWLARLQCEGQDAYQFCLQPPGAPAFIGNTPERLFHRKHLGVCSEALAATRPRGDSKVREMEIERDLLTSPKDDLEFSIVRENIREKLKTICDRVVVKPHKSVRKLARVQHLYSQLAGQLKREDDEFNILTALHPTPAVCGCPVEEARLLIKQIESFDRGMYAGPIGFFGGGESEFSVGIRSALVEKGLGALIYAGTGIVSGSNPSSEWNELELKISQFTKSLEHESALQPIN.

A chloroplast-targeting transit peptide spans Met1–Glu55.

The protein belongs to the isochorismate synthase family. Mg(2+) serves as cofactor.

The protein resides in the plastid. Its subcellular location is the chloroplast. The catalysed reaction is chorismate = isochorismate. It participates in siderophore biosynthesis; salicylate biosynthesis. Its function is as follows. Isochorismate synthase involved in the synthesis of salicylic acid (SA) required for both local and systemic acquired resistance (LAR and SAR) while SA synthesized through the phenylalanine ammonium lyase (PAL) pathway seems to potentiate plant cell death. Also involved in phylloquinone (vitamin K1) synthesis. Has no isochorismate pyruvate lyase (IPL) activity. The sequence is that of Isochorismate synthase 2, chloroplastic (ICS2) from Arabidopsis thaliana (Mouse-ear cress).